The following is a 638-amino-acid chain: Glucans biosynthesis glucosyltransferase H (638 aa).

Helical transmembrane passes span 60–82 (FYLI…AVMW), 97–119 (FMFL…FCVV), 415–437 (IGHY…IPLV), 464–486 (LWIF…FALL), 499–521 (LRVL…VVMY), and 578–600 (LAMW…ALTS).

This sequence belongs to the glycosyltransferase 2 family. OpgH subfamily.

It localises to the cell inner membrane. Its pathway is glycan metabolism; osmoregulated periplasmic glucan (OPG) biosynthesis. Its function is as follows. Involved in the biosynthesis of osmoregulated periplasmic glucans (OPGs). The polypeptide is Glucans biosynthesis glucosyltransferase H (Xylella fastidiosa (strain 9a5c)).